The following is a 229-amino-acid chain: Secretory carrier-associated membrane protein 4 (229 aa).

The Cytoplasmic segment spans residues 1 to 39; that stretch reads MSEKENNFPPLPKFIPVKPCFYQNFSDEIPVEHQVLVKR. 4 helical membrane-spanning segments follow: residues 40–60, 61–81, 105–125, and 149–169; these read IYRL…ACLA, WWIG…LLLF, FMAF…QAIG, and VVML…AIAI. Topologically, residues 170 to 229 are cytoplasmic; the sequence is MKVHRIYRGAGGSFQKAQTEWNTGTWRNPPSREAQYNNFSGNSLPEYPTVPSYPGSGQWP. T194 is subject to Phosphothreonine. A disordered region spans residues 208–229; that stretch reads FSGNSLPEYPTVPSYPGSGQWP.

This sequence belongs to the SCAMP family.

It localises to the membrane. Probably involved in membrane protein trafficking. In Homo sapiens (Human), this protein is Secretory carrier-associated membrane protein 4 (SCAMP4).